A 205-amino-acid polypeptide reads, in one-letter code: Thymidylate kinase (205 aa).

9 to 16 (GPEGSGKT) provides a ligand contact to ATP.

Belongs to the thymidylate kinase family.

The catalysed reaction is dTMP + ATP = dTDP + ADP. Its function is as follows. Phosphorylation of dTMP to form dTDP in both de novo and salvage pathways of dTTP synthesis. This Staphylococcus aureus (strain MSSA476) protein is Thymidylate kinase.